We begin with the raw amino-acid sequence, 187 residues long: Large ribosomal subunit protein bL17 (187 aa).

Belongs to the bacterial ribosomal protein bL17 family. As to quaternary structure, part of the 50S ribosomal subunit. Contacts protein L32.

This Rhodococcus opacus (strain B4) protein is Large ribosomal subunit protein bL17.